We begin with the raw amino-acid sequence, 319 residues long: MTKTKIIFMGTPQFAATVLKGLIDSNQYEILAVVTQPDRKVGRKQELRMTPVKELALTVNLPVLQPEKLSGSVEMTQIMTLLESGEVGIVTAAFGQFLPGKLLDVAQFAVNTHASLLPKYRGGAPIHYAIMNGEKEAGVTIMEMIRKMDAGDMIAQDSTPILEDDNVGTMFEKLALVGRDLLLETLPKYLSGQLKAQAQNEDEVTFSPNISPEEEKIDWNKSAREIFNKVRGMNPFPVAHTTWNGERFKIYETKVVDDSVGNLQAGEIVEKTKKSLKVATGEGLLELLFVQPAGKPKMDIVSFLNGLGQKIQVGDKFGD.

115-118 (SLLP) is a (6S)-5,6,7,8-tetrahydrofolate binding site.

It belongs to the Fmt family.

The catalysed reaction is L-methionyl-tRNA(fMet) + (6R)-10-formyltetrahydrofolate = N-formyl-L-methionyl-tRNA(fMet) + (6S)-5,6,7,8-tetrahydrofolate + H(+). Attaches a formyl group to the free amino group of methionyl-tRNA(fMet). The formyl group appears to play a dual role in the initiator identity of N-formylmethionyl-tRNA by promoting its recognition by IF2 and preventing the misappropriation of this tRNA by the elongation apparatus. The sequence is that of Methionyl-tRNA formyltransferase from Lactococcus lactis subsp. lactis (strain IL1403) (Streptococcus lactis).